A 104-amino-acid polypeptide reads, in one-letter code: MAPQSAVDRAAMAQAAQDIEQSANAIRGMQNQLASAKDQLRSHWEGDASMAFEAVFNRFNEDFSRVLKALDGMHESLVQTRITYEAREEAAQQSVNRVQALLNG.

Positions 12-43 (MAQAAQDIEQSANAIRGMQNQLASAKDQLRSH) form a coiled coil.

It belongs to the WXG100 family. CFP-10 subfamily. As to quaternary structure, in isolation forms a homodimer. Forms a tight 1:1 complex with EsxA. Forms a complex with EsxA and EccC, probably wholly mediated by EsxB; binds in a pocket in the third FtsK (ATPase) domain of EccC (residues 1163-1208).

It localises to the secreted. Functionally, may help regulate assembly and function of the type VII secretion system (T7SS). Binds to EccC and induces its multimerization. May serve as a chaperone for EsxA. The chain is ESAT-6-like protein from Thermomonospora curvata (strain ATCC 19995 / DSM 43183 / JCM 3096 / KCTC 9072 / NBRC 15933 / NCIMB 10081 / Henssen B9).